A 166-amino-acid chain; its full sequence is Interferon gamma (166 aa).

Residues methionine 1–cysteine 23 form the signal peptide. Glutamine 24 is subject to Pyrrolidone carboxylic acid. N-linked (GlcNAc...) asparagine glycans are attached at residues asparagine 39 and asparagine 106. The segment at alanine 147–glutamine 166 is disordered. Basic residues predominate over residues asparagine 148–glutamine 166.

Belongs to the type II (or gamma) interferon family. As to quaternary structure, homodimer. Interacts with IFNGR1 (via extracellular domain); this interaction promotes IFNGR1 dimerization. Released primarily from activated T lymphocytes.

Its subcellular location is the secreted. Type II interferon produced by immune cells such as T-cells and NK cells that plays crucial roles in antimicrobial, antiviral, and antitumor responses by activating effector immune cells and enhancing antigen presentation. Primarily signals through the JAK-STAT pathway after interaction with its receptor IFNGR1 to affect gene regulation. Upon IFNG binding, IFNGR1 intracellular domain opens out to allow association of downstream signaling components JAK2, JAK1 and STAT1, leading to STAT1 activation, nuclear translocation and transcription of IFNG-regulated genes. Many of the induced genes are transcription factors such as IRF1 that are able to further drive regulation of a next wave of transcription. Plays a role in class I antigen presentation pathway by inducing a replacement of catalytic proteasome subunits with immunoproteasome subunits. In turn, increases the quantity, quality, and repertoire of peptides for class I MHC loading. Increases the efficiency of peptide generation also by inducing the expression of activator PA28 that associates with the proteasome and alters its proteolytic cleavage preference. Up-regulates as well MHC II complexes on the cell surface by promoting expression of several key molecules such as cathepsins B/CTSB, H/CTSH, and L/CTSL. Participates in the regulation of hematopoietic stem cells during development and under homeostatic conditions by affecting their development, quiescence, and differentiation. This Equus caballus (Horse) protein is Interferon gamma (IFNG).